The chain runs to 151 residues: Large ribosomal subunit protein bL9 (151 aa).

Belongs to the bacterial ribosomal protein bL9 family.

Functionally, binds to the 23S rRNA. This Nitrosospira multiformis (strain ATCC 25196 / NCIMB 11849 / C 71) protein is Large ribosomal subunit protein bL9.